Reading from the N-terminus, the 377-residue chain is Chaperone protein DnaJ (377 aa).

Residues 5–70 (DYYELLGLQK…EKKAKYDQFG (66 aa)) enclose the J domain. The segment at 137–219 (GVEKEISVTR…CRGKGSVRKT (83 aa)) adopts a CR-type zinc-finger fold. Positions 150, 153, 167, 170, 193, 196, 207, and 210 each coordinate Zn(2+). CXXCXGXG motif repeat units follow at residues 150–157 (CEHCHGSG), 167–174 (CPTCSGSG), 193–200 (CDTCRGTG), and 207–214 (CSECRGKG).

The protein belongs to the DnaJ family. Homodimer. Zn(2+) is required as a cofactor.

It localises to the cytoplasm. Its function is as follows. Participates actively in the response to hyperosmotic and heat shock by preventing the aggregation of stress-denatured proteins and by disaggregating proteins, also in an autonomous, DnaK-independent fashion. Unfolded proteins bind initially to DnaJ; upon interaction with the DnaJ-bound protein, DnaK hydrolyzes its bound ATP, resulting in the formation of a stable complex. GrpE releases ADP from DnaK; ATP binding to DnaK triggers the release of the substrate protein, thus completing the reaction cycle. Several rounds of ATP-dependent interactions between DnaJ, DnaK and GrpE are required for fully efficient folding. Also involved, together with DnaK and GrpE, in the DNA replication of plasmids through activation of initiation proteins. This is Chaperone protein DnaJ from Clostridium beijerinckii (strain ATCC 51743 / NCIMB 8052) (Clostridium acetobutylicum).